We begin with the raw amino-acid sequence, 871 residues long: Alanine--tRNA ligase (871 aa).

Zn(2+)-binding residues include histidine 561, histidine 565, cysteine 665, and histidine 669.

The protein belongs to the class-II aminoacyl-tRNA synthetase family. Zn(2+) serves as cofactor.

The protein localises to the cytoplasm. It catalyses the reaction tRNA(Ala) + L-alanine + ATP = L-alanyl-tRNA(Ala) + AMP + diphosphate. In terms of biological role, catalyzes the attachment of alanine to tRNA(Ala) in a two-step reaction: alanine is first activated by ATP to form Ala-AMP and then transferred to the acceptor end of tRNA(Ala). Also edits incorrectly charged Ser-tRNA(Ala) and Gly-tRNA(Ala) via its editing domain. The chain is Alanine--tRNA ligase from Dehalococcoides mccartyi (strain ATCC BAA-2100 / JCM 16839 / KCTC 5957 / BAV1).